The sequence spans 214 residues: MKKLCAIFGGNFDPIHYGHINLAEKLAKDISIKKIILLPNNYPPHRNKTQTSISDKIKMIKLAIHNNPLFEISYLETKKNNIFYTIDTLKKIRKKISHLEPLCFIIGEDNLQTFYLWKNWREILLYSHLLIYPRKHKKQKNDELEKWIHSNTVYDCNLLHKQPCGLIFFSHAPCINISSSRIRKNYFYGKNSHSLLPSIVNNYILLKKLYYTNQ.

This sequence belongs to the NadD family.

It catalyses the reaction nicotinate beta-D-ribonucleotide + ATP + H(+) = deamido-NAD(+) + diphosphate. It functions in the pathway cofactor biosynthesis; NAD(+) biosynthesis; deamido-NAD(+) from nicotinate D-ribonucleotide: step 1/1. Catalyzes the reversible adenylation of nicotinate mononucleotide (NaMN) to nicotinic acid adenine dinucleotide (NaAD). This Buchnera aphidicola subsp. Acyrthosiphon pisum (strain 5A) protein is Probable nicotinate-nucleotide adenylyltransferase.